The following is a 196-amino-acid chain: Holliday junction branch migration complex subunit RuvA (196 aa).

The interval Met1–Ala63 is domain I. The tract at residues Asp64–Ala142 is domain II. The segment at Val143–Pro151 is flexible linker. The segment at Pro151 to Lys196 is domain III.

The protein belongs to the RuvA family. As to quaternary structure, homotetramer. Forms an RuvA(8)-RuvB(12)-Holliday junction (HJ) complex. HJ DNA is sandwiched between 2 RuvA tetramers; dsDNA enters through RuvA and exits via RuvB. An RuvB hexamer assembles on each DNA strand where it exits the tetramer. Each RuvB hexamer is contacted by two RuvA subunits (via domain III) on 2 adjacent RuvB subunits; this complex drives branch migration. In the full resolvosome a probable DNA-RuvA(4)-RuvB(12)-RuvC(2) complex forms which resolves the HJ.

It localises to the cytoplasm. In terms of biological role, the RuvA-RuvB-RuvC complex processes Holliday junction (HJ) DNA during genetic recombination and DNA repair, while the RuvA-RuvB complex plays an important role in the rescue of blocked DNA replication forks via replication fork reversal (RFR). RuvA specifically binds to HJ cruciform DNA, conferring on it an open structure. The RuvB hexamer acts as an ATP-dependent pump, pulling dsDNA into and through the RuvAB complex. HJ branch migration allows RuvC to scan DNA until it finds its consensus sequence, where it cleaves and resolves the cruciform DNA. In Mycobacterium sp. (strain JLS), this protein is Holliday junction branch migration complex subunit RuvA.